Here is a 447-residue protein sequence, read N- to C-terminus: Putative branched-chain amino acid carrier protein SAB1263c (447 aa).

12 helical membrane-spanning segments follow: residues 6–26, 40–60, 74–94, 114–134, 143–163, 193–213, 229–249, 290–310, 326–346, 350–370, 382–402, and 417–437; these read WVIG…IFPP, ILAF…VGAL, PKFS…LFAI, SSIA…YICL, IGSL…IKGY, GYLT…VNAV, LTAG…LGYI, LLGI…IGAV, FVLV…NAVI, IPVL…ILIA, IPVI…LGWL, and LEWF…GIFV.

Belongs to the branched chain amino acid transporter family.

Its subcellular location is the cell membrane. Functionally, component of the transport system for branched-chain amino acids (leucine, isoleucine and valine), which is coupled to a proton motive force (Potential). Contributes to NaCl tolerance. The protein is Putative branched-chain amino acid carrier protein SAB1263c of Staphylococcus aureus (strain bovine RF122 / ET3-1).